The primary structure comprises 311 residues: Tryptophan 2,3-dioxygenase (311 aa).

Residues 1 to 37 form a disordered region; it reads MQPPGGDAPAGCPFSGARAAQPAQAAHEAPHVPGEAD. The segment covering 17-27 has biased composition (low complexity); that stretch reads ARAAQPAQAAH. Substrate is bound by residues 80–84, tyrosine 142, and arginine 146; that span reads FIIQH. Histidine 269 is a binding site for heme. Threonine 283 lines the substrate pocket.

This sequence belongs to the tryptophan 2,3-dioxygenase family. Homotetramer. Heme is required as a cofactor.

It carries out the reaction L-tryptophan + O2 = N-formyl-L-kynurenine. It participates in amino-acid degradation; L-tryptophan degradation via kynurenine pathway; L-kynurenine from L-tryptophan: step 1/2. Functionally, heme-dependent dioxygenase that catalyzes the oxidative cleavage of the L-tryptophan (L-Trp) pyrrole ring and converts L-tryptophan to N-formyl-L-kynurenine. Catalyzes the oxidative cleavage of the indole moiety. The protein is Tryptophan 2,3-dioxygenase of Burkholderia orbicola (strain MC0-3).